Reading from the N-terminus, the 455-residue chain is Bifunctional protein GlmU (455 aa).

Residues 1–226 are pyrophosphorylase; sequence MALNVVILAA…AIEVEGANNR (226 aa). UDP-N-acetyl-alpha-D-glucosamine contacts are provided by residues 8–11, Lys22, Gln73, 78–79, 100–102, Gly137, Glu151, Asn166, and Asn224; these read LAAG, GT, and YGD. A Mg(2+)-binding site is contributed by Asp102. Asn224 provides a ligand contact to Mg(2+). The linker stretch occupies residues 227-247; sequence VQLAQLERAYQARAAEKLMLE. Positions 248–455 are N-acetyltransferase; the sequence is GANLRDPARL…WARPVKKPKS (208 aa). 2 residues coordinate UDP-N-acetyl-alpha-D-glucosamine: Arg330 and Lys348. Catalysis depends on His360, which acts as the Proton acceptor. UDP-N-acetyl-alpha-D-glucosamine-binding residues include Tyr363 and Asn374. Acetyl-CoA contacts are provided by residues Ala377, 383 to 384, Ser402, Ala420, and Arg437; that span reads NY.

The protein in the N-terminal section; belongs to the N-acetylglucosamine-1-phosphate uridyltransferase family. It in the C-terminal section; belongs to the transferase hexapeptide repeat family. As to quaternary structure, homotrimer. It depends on Mg(2+) as a cofactor.

The protein localises to the cytoplasm. The enzyme catalyses alpha-D-glucosamine 1-phosphate + acetyl-CoA = N-acetyl-alpha-D-glucosamine 1-phosphate + CoA + H(+). It carries out the reaction N-acetyl-alpha-D-glucosamine 1-phosphate + UTP + H(+) = UDP-N-acetyl-alpha-D-glucosamine + diphosphate. Its pathway is nucleotide-sugar biosynthesis; UDP-N-acetyl-alpha-D-glucosamine biosynthesis; N-acetyl-alpha-D-glucosamine 1-phosphate from alpha-D-glucosamine 6-phosphate (route II): step 2/2. The protein operates within nucleotide-sugar biosynthesis; UDP-N-acetyl-alpha-D-glucosamine biosynthesis; UDP-N-acetyl-alpha-D-glucosamine from N-acetyl-alpha-D-glucosamine 1-phosphate: step 1/1. It functions in the pathway bacterial outer membrane biogenesis; LPS lipid A biosynthesis. Functionally, catalyzes the last two sequential reactions in the de novo biosynthetic pathway for UDP-N-acetylglucosamine (UDP-GlcNAc). The C-terminal domain catalyzes the transfer of acetyl group from acetyl coenzyme A to glucosamine-1-phosphate (GlcN-1-P) to produce N-acetylglucosamine-1-phosphate (GlcNAc-1-P), which is converted into UDP-GlcNAc by the transfer of uridine 5-monophosphate (from uridine 5-triphosphate), a reaction catalyzed by the N-terminal domain. The sequence is that of Bifunctional protein GlmU from Shewanella sediminis (strain HAW-EB3).